A 210-amino-acid polypeptide reads, in one-letter code: Mitochondrial cardiolipin hydrolase (210 aa).

The Mitochondrial intermembrane segment spans residues 1 to 6 (MLLWGR). Residues 7–24 (WKVVAGLAGLALSLELLL) traverse the membrane as a helical segment. Residues 25–210 (RYMRRRKPIR…YDFFPEKENK (186 aa)) are Cytoplasmic-facing. Residues 138-165 (SSGYMHHKFAVVDGTVVLTGSLNWTVQA) enclose the PLD phosphodiesterase domain. Catalysis depends on residues His143, Lys145, and Asp150.

The protein belongs to the phospholipase D family. MitoPLD/Zucchini subfamily. In terms of assembly, homodimer.

The protein resides in the mitochondrion outer membrane. The catalysed reaction is a cardiolipin + H2O = a 1,2-diacyl-sn-glycero-3-phospho-(1'-sn-glycerol) + a 1,2-diacyl-sn-glycero-3-phosphate + H(+). In terms of biological role, presents phospholipase and nuclease activities, depending on the different physiological conditions. Plays a key role in mitochondrial fusion and fission via its phospholipase activity. In its phospholipase role, it uses the mitochondrial lipid cardiolipin as substrate to generate phosphatidate (PA or 1,2-diacyl-sn-glycero-3-phosphate), a second messenger signaling lipid. Production of PA facilitates Mitofusin-mediated fusion, whereas the cleavage of PA by the Lipin family of phosphatases produces diacylgycerol (DAG) which promotes mitochondrial fission. Regulates mitochondrial shape through facilitating mitochondrial fusion. During spermatogenesis, plays a critical role in PIWI-interacting RNA (piRNA) biogenesis. piRNAs provide essential protection against the activity of mobile genetic elements. piRNA-mediated transposon silencing is thus critical for maintaining genome stability, in particular in germline cells when transposons are mobilized as a consequence of wide-spread genomic demethylation. Has been shown to be a backbone-non-specific, single strand-specific nuclease, cleaving either RNA or DNA substrates with similar affinity. Produces 5' phosphate and 3' hydroxyl termini, suggesting it could directly participate in the processing of primary piRNA transcripts. Has been proposed to act as a cardiolipin hydrolase to generate phosphatidic acid at mitochondrial surface. Although it cannot be excluded that it can act as a phospholipase in some circumstances, this activity could not be confirmed. The protein is Mitochondrial cardiolipin hydrolase (pld6) of Xenopus tropicalis (Western clawed frog).